The following is a 364-amino-acid chain: Probable UDP-arabinopyranose mutase 1 (364 aa).

The DXD motif motif lies at 110 to 112 (DDD). The N-linked (Glc...) arginine glycan is linked to Arg158.

It belongs to the RGP family. In terms of assembly, homopentamer or homohexamer. Requires Mn(2+) as cofactor. Mg(2+) serves as cofactor. In terms of processing, reversibly glycosylated by UDP-glucose, UDP-xylose and UDP-galactose.

The protein resides in the secreted. It is found in the cell wall. The protein localises to the cell junction. Its subcellular location is the plasmodesma. It localises to the golgi apparatus. The enzyme catalyses UDP-beta-L-arabinofuranose = UDP-beta-L-arabinopyranose. Probable UDP-L-arabinose mutase involved in the biosynthesis of cell wall non-cellulosic polysaccharides. Was initially shown to possess an autoglycosylating activity which is dependent on the presence of UDP-glucose and manganese. The protein is Probable UDP-arabinopyranose mutase 1 of Zea mays (Maize).